We begin with the raw amino-acid sequence, 37 residues long: Esculentin-2P (37 aa).

C31 and C37 are disulfide-bonded.

As to expression, expressed by the skin glands.

It is found in the secreted. Antibacterial activity against Gram-negative bacterium E.coli. The chain is Esculentin-2P from Lithobates pipiens (Northern leopard frog).